Reading from the N-terminus, the 188-residue chain is Elongation factor P (188 aa).

It belongs to the elongation factor P family.

Its subcellular location is the cytoplasm. Its pathway is protein biosynthesis; polypeptide chain elongation. Its function is as follows. Involved in peptide bond synthesis. Stimulates efficient translation and peptide-bond synthesis on native or reconstituted 70S ribosomes in vitro. Probably functions indirectly by altering the affinity of the ribosome for aminoacyl-tRNA, thus increasing their reactivity as acceptors for peptidyl transferase. In Stutzerimonas stutzeri (strain A1501) (Pseudomonas stutzeri), this protein is Elongation factor P.